Here is a 197-residue protein sequence, read N- to C-terminus: Holliday junction branch migration complex subunit RuvA (197 aa).

The domain I stretch occupies residues Met1–Phe64. Residues Thr65–Asp143 form a domain II region. The segment at Leu144–Ser154 is flexible linker. The domain III stretch occupies residues Ser154 to Gly197.

Belongs to the RuvA family. As to quaternary structure, homotetramer. Forms an RuvA(8)-RuvB(12)-Holliday junction (HJ) complex. HJ DNA is sandwiched between 2 RuvA tetramers; dsDNA enters through RuvA and exits via RuvB. An RuvB hexamer assembles on each DNA strand where it exits the tetramer. Each RuvB hexamer is contacted by two RuvA subunits (via domain III) on 2 adjacent RuvB subunits; this complex drives branch migration. In the full resolvosome a probable DNA-RuvA(4)-RuvB(12)-RuvC(2) complex forms which resolves the HJ.

Its subcellular location is the cytoplasm. In terms of biological role, the RuvA-RuvB-RuvC complex processes Holliday junction (HJ) DNA during genetic recombination and DNA repair, while the RuvA-RuvB complex plays an important role in the rescue of blocked DNA replication forks via replication fork reversal (RFR). RuvA specifically binds to HJ cruciform DNA, conferring on it an open structure. The RuvB hexamer acts as an ATP-dependent pump, pulling dsDNA into and through the RuvAB complex. HJ branch migration allows RuvC to scan DNA until it finds its consensus sequence, where it cleaves and resolves the cruciform DNA. The polypeptide is Holliday junction branch migration complex subunit RuvA (Clostridium tetani (strain Massachusetts / E88)).